A 454-amino-acid polypeptide reads, in one-letter code: Bifunctional protein GlmU (454 aa).

The tract at residues 1–225 (MNIVILAAGM…IWETLGVNSK (225 aa)) is pyrophosphorylase. Residues 6–9 (LAAG), Lys-20, Gln-71, 76–77 (GT), 98–100 (YGD), Gly-135, Glu-150, Asn-165, and Asn-223 contribute to the UDP-N-acetyl-alpha-D-glucosamine site. Residue Asp-100 participates in Mg(2+) binding. Asn-223 is a binding site for Mg(2+). The tract at residues 226-246 (LQLAEVERIHQGNQARRLLEA) is linker. Positions 247-454 (GVTLLDPARI…WQRPVKQPKK (208 aa)) are N-acetyltransferase. Arg-329 and Lys-347 together coordinate UDP-N-acetyl-alpha-D-glucosamine. His-359 serves as the catalytic Proton acceptor. UDP-N-acetyl-alpha-D-glucosamine is bound by residues Tyr-362 and Asn-373. Acetyl-CoA is bound by residues Ala-376, 382-383 (NY), Ser-401, Ala-419, and Arg-436.

In the N-terminal section; belongs to the N-acetylglucosamine-1-phosphate uridyltransferase family. It in the C-terminal section; belongs to the transferase hexapeptide repeat family. In terms of assembly, homotrimer. It depends on Mg(2+) as a cofactor.

The protein localises to the cytoplasm. The catalysed reaction is alpha-D-glucosamine 1-phosphate + acetyl-CoA = N-acetyl-alpha-D-glucosamine 1-phosphate + CoA + H(+). It catalyses the reaction N-acetyl-alpha-D-glucosamine 1-phosphate + UTP + H(+) = UDP-N-acetyl-alpha-D-glucosamine + diphosphate. The protein operates within nucleotide-sugar biosynthesis; UDP-N-acetyl-alpha-D-glucosamine biosynthesis; N-acetyl-alpha-D-glucosamine 1-phosphate from alpha-D-glucosamine 6-phosphate (route II): step 2/2. It participates in nucleotide-sugar biosynthesis; UDP-N-acetyl-alpha-D-glucosamine biosynthesis; UDP-N-acetyl-alpha-D-glucosamine from N-acetyl-alpha-D-glucosamine 1-phosphate: step 1/1. It functions in the pathway bacterial outer membrane biogenesis; LPS lipid A biosynthesis. In terms of biological role, catalyzes the last two sequential reactions in the de novo biosynthetic pathway for UDP-N-acetylglucosamine (UDP-GlcNAc). The C-terminal domain catalyzes the transfer of acetyl group from acetyl coenzyme A to glucosamine-1-phosphate (GlcN-1-P) to produce N-acetylglucosamine-1-phosphate (GlcNAc-1-P), which is converted into UDP-GlcNAc by the transfer of uridine 5-monophosphate (from uridine 5-triphosphate), a reaction catalyzed by the N-terminal domain. This is Bifunctional protein GlmU from Cupriavidus necator (strain ATCC 17699 / DSM 428 / KCTC 22496 / NCIMB 10442 / H16 / Stanier 337) (Ralstonia eutropha).